Reading from the N-terminus, the 361-residue chain is UDP-3-O-acylglucosamine N-acyltransferase (361 aa).

H253 serves as the catalytic Proton acceptor.

The protein belongs to the transferase hexapeptide repeat family. LpxD subfamily. In terms of assembly, homotrimer.

The catalysed reaction is a UDP-3-O-[(3R)-3-hydroxyacyl]-alpha-D-glucosamine + a (3R)-hydroxyacyl-[ACP] = a UDP-2-N,3-O-bis[(3R)-3-hydroxyacyl]-alpha-D-glucosamine + holo-[ACP] + H(+). It participates in bacterial outer membrane biogenesis; LPS lipid A biosynthesis. Catalyzes the N-acylation of UDP-3-O-acylglucosamine using 3-hydroxyacyl-ACP as the acyl donor. Is involved in the biosynthesis of lipid A, a phosphorylated glycolipid that anchors the lipopolysaccharide to the outer membrane of the cell. The polypeptide is UDP-3-O-acylglucosamine N-acyltransferase (Burkholderia mallei (strain ATCC 23344)).